The chain runs to 535 residues: Arylsulfatase K (535 aa).

Positions 1-22 (MLLLWLSVFAASALAAPDRGAG) are cleaved as a signal peptide. Ca(2+) is bound by residues Asp44 and Cys84. Cys84 serves as the catalytic Nucleophile. The residue at position 84 (Cys84) is a 3-oxoalanine (Cys). Asn112 carries an N-linked (GlcNAc...) asparagine glycan. Lys132 is a binding site for substrate. Asn197 carries an N-linked (GlcNAc...) asparagine glycan. Substrate is bound at residue His255. Asn266 carries N-linked (GlcNAc...) asparagine glycosylation. Ca(2+)-binding residues include Asp317 and His318. Residues Asn379, Asn417, and Asn502 are each glycosylated (N-linked (GlcNAc...) asparagine).

The protein belongs to the sulfatase family. The cofactor is Ca(2+). In terms of processing, the conversion to 3-oxoalanine (also known as C-formylglycine, FGly), of a serine or cysteine residue in prokaryotes and of a cysteine residue in eukaryotes, is critical for catalytic activity. The 75-kDa precursor undergoes proteolytic processing to yield a 23 kDa form. Post-translationally, N-glycosylated with both high mannose and complex type sugars.

The protein localises to the secreted. It localises to the lysosome. It catalyses the reaction an aryl sulfate + H2O = a phenol + sulfate + H(+). It carries out the reaction Hydrolysis of the 2-sulfate groups of the 2-O-sulfo-D-glucuronate residues of chondroitin sulfate, heparin and heparitin sulfate.. In terms of biological role, catalyzes the hydrolysis of pseudosubstrates such as p-nitrocatechol sulfate and p-nitrophenyl sulfate. Catalyzes the hydrolysis of the 2-sulfate groups of the 2-O-sulfo-D-glucuronate residues of chondroitin sulfate, heparin and heparitin sulfate. Acts selectively on 2-sulfoglucuronate and lacks activity against 2-sulfoiduronate. The protein is Arylsulfatase K (ARSK) of Canis lupus familiaris (Dog).